The following is a 443-amino-acid chain: uncharacterized protein (443 aa).

4 helical membrane-spanning segments follow: residues 15 to 35 (IYAG…DGLA), 38 to 58 (LGMA…GPGS), 59 to 79 (AWQG…LSWL), and 181 to 201 (VVTA…IPAL). The 4 X 10 AA approximate repeats stretch occupies residues 231-270 (NFGIGNIGNANLGNGNIGNANLGSGNAGFFNFGNGNDGNT).

It belongs to the mycobacterial PPE family.

It localises to the cell membrane. This is an uncharacterized protein from Mycobacterium tuberculosis (strain ATCC 25618 / H37Rv).